The chain runs to 502 residues: MRIGFDHEKYLEEQSKYILERVNNYDKLYLEFGGKLLFDLHAKRVLPGFDENAKIKLLHKLKEKVEIIICLYAGDIERNKIRGDFGITYDVDVLRLIDDLRGYDLEVNSVVITRYSGQPATNIFINKLERRGIKVYKHEATKGYPTDVDTIVSDEGYGKNPYIETTKPIVVVTAPGPGSGKLATCLSQLYHEYKRGNVAGYSKFETFPVWNVPLKHPLNIAYESATVDLKDVNMIDSFHFDAYNKVAVNYNRDIESFPVLKRIIEKITGEESVYKSPTDMGVNRVGFGIVDDEVVKEASKQEIIRRAFKTACEYKKGYVDKETFHRAKLIMEEMNLKEEDRKVVIPARKYAAKLKERANKSETCTVVALELEDGTILTGRSSELMDGTAAVILNAVKHYANISDEIHLISPVILEPIINLKVKTLGSKRTALSCEEVLIALSICAATNPTAQVAMCKLPMLKGCQAHSTTILSTNEEQTFRKLGIDVTCDPEYISESLYYNN.

It belongs to the UPF0371 family.

The protein is UPF0371 protein CLB_0371 of Clostridium botulinum (strain ATCC 19397 / Type A).